A 1039-amino-acid polypeptide reads, in one-letter code: Error-prone DNA polymerase (1039 aa).

Belongs to the DNA polymerase type-C family. DnaE2 subfamily.

The protein resides in the cytoplasm. The catalysed reaction is DNA(n) + a 2'-deoxyribonucleoside 5'-triphosphate = DNA(n+1) + diphosphate. Its function is as follows. DNA polymerase involved in damage-induced mutagenesis and translesion synthesis (TLS). It is not the major replicative DNA polymerase. The chain is Error-prone DNA polymerase from Idiomarina loihiensis (strain ATCC BAA-735 / DSM 15497 / L2-TR).